The sequence spans 168 residues: uncharacterized protein (168 aa).

Helical transmembrane passes span methionine 1–arginine 21, proline 41–methionine 61, tryptophan 68–cysteine 88, and valine 123–phenylalanine 143.

The protein resides in the cell membrane. This is an uncharacterized protein from Bacillus subtilis (strain 168).